The chain runs to 308 residues: Ribosomal RNA large subunit methyltransferase F (308 aa).

It belongs to the methyltransferase superfamily. METTL16/RlmF family.

It is found in the cytoplasm. It carries out the reaction adenosine(1618) in 23S rRNA + S-adenosyl-L-methionine = N(6)-methyladenosine(1618) in 23S rRNA + S-adenosyl-L-homocysteine + H(+). In terms of biological role, specifically methylates the adenine in position 1618 of 23S rRNA. In Escherichia coli O127:H6 (strain E2348/69 / EPEC), this protein is Ribosomal RNA large subunit methyltransferase F.